The chain runs to 1357 residues: Kinectin (1357 aa).

Over 1–6 the chain is Cytoplasmic; the sequence is MEFYES. A helical; Signal-anchor for type II membrane protein transmembrane segment spans residues 7–29; that stretch reads AYFIVLIPSIVITVIFLFFWLFM. At 30-1357 the chain is on the lumenal side; that stretch reads KETLYDEVLA…KEKEHYQVLE (1328 aa). Disordered regions lie at residues 48-81 and 103-218; these read IPTK…ESVP and NVVE…KQKT. Position 75 is a phosphoserine; by FAM20C (serine 75). The residue at position 77 (serine 77) is a Phosphoserine. The segment covering 121 to 135 has biased composition (basic and acidic residues); that stretch reads QKPVLEEQVIKESDA. Threonine 153 carries the phosphothreonine modification. At serine 156 the chain carries Phosphoserine. Positions 161–171 are enriched in basic residues; that stretch reads SKKKPGQKKSK. Residues asparagine 172, asparagine 435, asparagine 772, asparagine 904, and asparagine 1055 are each glycosylated (N-linked (GlcNAc...) asparagine). Over residues 172–182 the composition is skewed to basic and acidic residues; it reads NGSDDQDKKVE. Positions 330–1356 form a coiled coil; the sequence is LIHQLQEKDK…TKEKEHYQVL (1027 aa). Serine 1084 carries the phosphoserine modification. 2 N-linked (GlcNAc...) asparagine glycosylation sites follow: asparagine 1088 and asparagine 1263. Serine 1313 carries the post-translational modification Phosphoserine. The N-linked (GlcNAc...) asparagine glycan is linked to asparagine 1329.

Belongs to the kinectin family. As to quaternary structure, parallel homodimers formed between the membrane-bound and the cytosolic form, and also between 2 cytosolic forms. High levels in peripheral blood lymphocytes, testis and ovary, lower levels in spleen, thymus, prostate, small intestine and colon.

Its subcellular location is the endoplasmic reticulum membrane. Functionally, receptor for kinesin thus involved in kinesin-driven vesicle motility. Accumulates in integrin-based adhesion complexes (IAC) upon integrin aggregation by fibronectin. In Homo sapiens (Human), this protein is Kinectin (KTN1).